The following is a 333-amino-acid chain: Dioxygenase cnsJ (333 aa).

His153, Asp155, and His235 together coordinate Fe cation. The disordered stretch occupies residues 309–333 (NAQPEGEDDGGMKPNEGEHVVEAQI). Residues 323-333 (NEGEHVVEAQI) show a composition bias toward basic and acidic residues.

Belongs to the PhyH family. As to quaternary structure, homodimer. It depends on Fe cation as a cofactor.

Its pathway is alkaloid biosynthesis. In terms of biological role, dioxygenase; part of the gene cluster that mediates the biosynthesis of communesins, a prominent class of indole alkaloids with great potential as pharmaceuticals. Communesins are biosynthesized by the coupling of tryptamine and aurantioclavine, two building blocks derived from L-tryptophan. The L-tryptophan decarboxylase cnsB converts L-tryptophan to tryptamine, whereas the tryptophan dimethylallyltransferase cnsF converts L-tryptophan to 4-dimethylallyl tryptophan which is further transformed to aurantioclavine by the aurantioclavine synthase cnsA, probably aided by the catalase cnsD. The cytochrome P450 monooxygenase cnsC catalyzes the heterodimeric coupling between the two different indole moieties, tryptamine and aurantioclavine, to construct vicinal quaternary stereocenters and yield the heptacyclic communesin scaffold. The O-methyltransferase cnsE then methylates the communesin scaffold to produce communesin K, the simplest characterized communesin that contains the heptacyclic core. The dioxygenase cnsJ converts communesin K into communesin I. Acylation to introduce the hexadienyl group at position N16 of communesin I by the acyltransferase cnsK leads to the production of communesin B. The hexadienyl group is produced by the highly reducing polyketide synthase cnsI, before being hydrolytically removed from cnsI by the serine hydrolase cnsH, converted into hexadienyl-CoA by the CoA ligase cnsG, and then transferred to communesin I by cnsK. Surprisingly, cnsK may also be a promiscuous acyltransferase that can tolerate a range of acyl groups, including acetyl-, propionyl-, and butyryl-CoA, which lead to communesins A, G and H respectively. The roles of the alpha-ketoglutarate-dependent dioxygenases cnsM and cnsP have still to be determined. This chain is Dioxygenase cnsJ, found in Penicillium expansum (Blue mold rot fungus).